Here is a 384-residue protein sequence, read N- to C-terminus: Carbamoyl phosphate synthase small chain (384 aa).

Residues 1 to 189 (MSKSALLVLE…GLPEAKDDSE (189 aa)) are CPSase. Positions 47, 241, and 243 each coordinate L-glutamine. Residues 193–380 (HVVAYDFGAK…IELIKLSVNE (188 aa)) enclose the Glutamine amidotransferase type-1 domain. The active-site Nucleophile is the cysteine 269. 5 residues coordinate L-glutamine: leucine 270, glutamine 273, asparagine 311, glycine 313, and phenylalanine 314. Catalysis depends on residues histidine 353 and glutamate 355.

The protein belongs to the CarA family. As to quaternary structure, composed of two chains; the small (or glutamine) chain promotes the hydrolysis of glutamine to ammonia, which is used by the large (or ammonia) chain to synthesize carbamoyl phosphate. Tetramer of heterodimers (alpha,beta)4.

It carries out the reaction hydrogencarbonate + L-glutamine + 2 ATP + H2O = carbamoyl phosphate + L-glutamate + 2 ADP + phosphate + 2 H(+). The enzyme catalyses L-glutamine + H2O = L-glutamate + NH4(+). Its pathway is amino-acid biosynthesis; L-arginine biosynthesis; carbamoyl phosphate from bicarbonate: step 1/1. It functions in the pathway pyrimidine metabolism; UMP biosynthesis via de novo pathway; (S)-dihydroorotate from bicarbonate: step 1/3. Small subunit of the glutamine-dependent carbamoyl phosphate synthetase (CPSase). CPSase catalyzes the formation of carbamoyl phosphate from the ammonia moiety of glutamine, carbonate, and phosphate donated by ATP, constituting the first step of 2 biosynthetic pathways, one leading to arginine and/or urea and the other to pyrimidine nucleotides. The small subunit (glutamine amidotransferase) binds and cleaves glutamine to supply the large subunit with the substrate ammonia. The polypeptide is Carbamoyl phosphate synthase small chain (Photobacterium profundum (strain SS9)).